Consider the following 202-residue polypeptide: Small ribosomal subunit protein uS4c (202 aa).

Residues G20 to S43 are disordered. Residues M90–Y152 form the S4 RNA-binding domain.

The protein belongs to the universal ribosomal protein uS4 family. Part of the 30S ribosomal subunit. Contacts protein S5. The interaction surface between S4 and S5 is involved in control of translational fidelity.

The protein resides in the plastid. It is found in the chloroplast. Its function is as follows. One of the primary rRNA binding proteins, it binds directly to 16S rRNA where it nucleates assembly of the body of the 30S subunit. In terms of biological role, with S5 and S12 plays an important role in translational accuracy. This Rhodomonas salina (Cryptomonas salina) protein is Small ribosomal subunit protein uS4c (rps4).